Here is a 438-residue protein sequence, read N- to C-terminus: tRNA(Ile)-lysidine synthase (438 aa).

26–31 serves as a coordination point for ATP; it reads SGGADS.

Belongs to the tRNA(Ile)-lysidine synthase family.

Its subcellular location is the cytoplasm. It carries out the reaction cytidine(34) in tRNA(Ile2) + L-lysine + ATP = lysidine(34) in tRNA(Ile2) + AMP + diphosphate + H(+). Functionally, ligates lysine onto the cytidine present at position 34 of the AUA codon-specific tRNA(Ile) that contains the anticodon CAU, in an ATP-dependent manner. Cytidine is converted to lysidine, thus changing the amino acid specificity of the tRNA from methionine to isoleucine. This Parabacteroides distasonis (strain ATCC 8503 / DSM 20701 / CIP 104284 / JCM 5825 / NCTC 11152) protein is tRNA(Ile)-lysidine synthase.